Here is a 194-residue protein sequence, read N- to C-terminus: Peptidyl-tRNA hydrolase (194 aa).

Tyr16 contacts tRNA. The Proton acceptor role is filled by His21. The tRNA site is built by Phe67, Asn69, and Asn115.

This sequence belongs to the PTH family. In terms of assembly, monomer.

The protein localises to the cytoplasm. It carries out the reaction an N-acyl-L-alpha-aminoacyl-tRNA + H2O = an N-acyl-L-amino acid + a tRNA + H(+). Functionally, hydrolyzes ribosome-free peptidyl-tRNAs (with 1 or more amino acids incorporated), which drop off the ribosome during protein synthesis, or as a result of ribosome stalling. Its function is as follows. Catalyzes the release of premature peptidyl moieties from peptidyl-tRNA molecules trapped in stalled 50S ribosomal subunits, and thus maintains levels of free tRNAs and 50S ribosomes. The sequence is that of Peptidyl-tRNA hydrolase from Salmonella paratyphi B (strain ATCC BAA-1250 / SPB7).